The primary structure comprises 502 residues: MSIKAEEISALIKQQIENYQSEIKVSDVGTVIQVGDGIARAHGLDNVMAGELVEFSNGVMGMAQNLEENNVGIIILGPYTEIREGDEVRRTGRIMEVPVGEQLIGRVVNSLGQPVDGLGPVETTKTRPIEGAAPGVMDRKSVHEPLQTGIKAIDALVPIGRGQRELIIGDRQTGKTSVAIDTILNQKDQDMVCIYVAIGQKESTVRNVVETLRKHGALDYTIVVTASASQPAPLLFLAPYAGVTMGEEFMYNGKHVLVIYDDLTKQASAYRELSLLLRRPPGREAYPGDVFYLHSRLLERAAKLSDAKGGGSLTALPFIETQAGDVSAYIPTNVISITDGQIFLQSDLFFSGVRPAINAGLSVSRVGGSAQIKAMKKVAGTLRLDLASYRELESFAQFGSDLDQATQAKLNRGARTVEILKQGLHKPLRVEKQVAVLYALTKGFLDDVPVSDITRFEDEYLTWLESNRKEVLESIRTTGGLPEAGLFESALEEFKKTFIASE.

An ATP-binding site is contributed by 169 to 176 (GDRQTGKT).

It belongs to the ATPase alpha/beta chains family. F-type ATPases have 2 components, CF(1) - the catalytic core - and CF(0) - the membrane proton channel. CF(1) has five subunits: alpha(3), beta(3), gamma(1), delta(1), epsilon(1). CF(0) has three main subunits: a(1), b(2) and c(9-12). The alpha and beta chains form an alternating ring which encloses part of the gamma chain. CF(1) is attached to CF(0) by a central stalk formed by the gamma and epsilon chains, while a peripheral stalk is formed by the delta and b chains.

The protein resides in the cell membrane. It catalyses the reaction ATP + H2O + 4 H(+)(in) = ADP + phosphate + 5 H(+)(out). Produces ATP from ADP in the presence of a proton gradient across the membrane. The alpha chain is a regulatory subunit. In Priestia megaterium (strain ATCC 12872 / QMB1551) (Bacillus megaterium), this protein is ATP synthase subunit alpha.